A 67-amino-acid polypeptide reads, in one-letter code: Protein C' (67 aa).

This sequence belongs to the rhabdoviruses C protein family.

Functionally, seems to stimulates transcription by the viral polymerase. May play a role in viral pathogenesis or transmission by insects vectors. The chain is Protein C' (P) from Vesicular stomatitis Indiana virus (strain San Juan) (VSIV).